Reading from the N-terminus, the 731-residue chain is E3 ubiquitin-protein ligase SMURF1 (731 aa).

One can recognise a C2 domain in the interval 1–120 (MSNVVTRRGG…TGYQRLDLCK (120 aa)). The disordered stretch occupies residues 210 to 235 (RVRGPEVREHVQTPQNRSHGFQSQDL). Residues 221 to 234 (QTPQNRSHGFQSQD) are compositionally biased toward polar residues. 2 consecutive WW domains span residues 233–266 (QDLP…DPRI) and 279–312 (GSLP…DPRL). Residues 394 to 731 (RPKDLKKRLM…VEETSGFAVE (338 aa)) form the HECT domain. C699 acts as the Glycyl thioester intermediate in catalysis.

It localises to the cytoplasm. The protein resides in the cell membrane. The enzyme catalyses S-ubiquitinyl-[E2 ubiquitin-conjugating enzyme]-L-cysteine + [acceptor protein]-L-lysine = [E2 ubiquitin-conjugating enzyme]-L-cysteine + N(6)-ubiquitinyl-[acceptor protein]-L-lysine.. Its pathway is protein modification; protein ubiquitination. E3 ubiquitin-protein ligase that acts as a negative regulator of BMP signaling pathway. Mediates ubiquitination and degradation of smad1 and smad5, 2 receptor-regulated SMADs specific for the BMP pathway. Promotes ubiquitination and subsequent proteasomal degradation of TRAF family members and rhoa. May play a role in dendrite formation by melanocytes. In Xenopus laevis (African clawed frog), this protein is E3 ubiquitin-protein ligase SMURF1 (smurf1).